The following is a 231-amino-acid chain: Chromosome partition protein MukE (231 aa).

The disordered stretch occupies residues 195–231 (MIRDGEAMPVEGSLSLKDDSDDNDRTDDTAPETGEDE). The span at 213 to 231 (DSDDNDRTDDTAPETGEDE) shows a compositional bias: acidic residues.

This sequence belongs to the MukE family. As to quaternary structure, interacts, and probably forms a ternary complex, with MukF and MukB. The complex formation is stimulated by calcium or magnesium.

The protein localises to the cytoplasm. It localises to the nucleoid. Involved in chromosome condensation, segregation and cell cycle progression. May participate in facilitating chromosome segregation by condensation DNA from both sides of a centrally located replisome during cell division. Probably acts via its interaction with MukB and MukF. The chain is Chromosome partition protein MukE from Pectobacterium atrosepticum (strain SCRI 1043 / ATCC BAA-672) (Erwinia carotovora subsp. atroseptica).